Consider the following 708-residue polypeptide: Ion-translocating oxidoreductase complex subunit C (708 aa).

4Fe-4S ferredoxin-type domains follow at residues 369–397 (GEPQEEQSCIRCSACADACPADLLPQQLY) and 407–436 (KATTHNIADCIECGACAWVCPSNIPLVQYF). [4Fe-4S] cluster contacts are provided by Cys-377, Cys-380, Cys-383, Cys-387, Cys-416, Cys-419, Cys-422, and Cys-426. Residues 663–684 (KARKLEQQQTNAEPEEQVDPRK) are disordered.

It belongs to the 4Fe4S bacterial-type ferredoxin family. RnfC subfamily. The complex is composed of six subunits: RsxA, RsxB, RsxC, RsxD, RsxE and RsxG. It depends on [4Fe-4S] cluster as a cofactor.

Its subcellular location is the cell inner membrane. Functionally, part of a membrane-bound complex that couples electron transfer with translocation of ions across the membrane. Required to maintain the reduced state of SoxR. This chain is Ion-translocating oxidoreductase complex subunit C, found in Shigella boydii serotype 18 (strain CDC 3083-94 / BS512).